The chain runs to 379 residues: Cytochrome b (379 aa).

4 helical membrane passes run 34 to 54, 78 to 99, 114 to 134, and 179 to 199; these read FGSL…FLAM, WLIR…YLHI, WNTG…GYVL, and FFTF…VHLL. Heme b is bound by residues His84 and His98. His183 and His197 together coordinate heme b. His202 is an a ubiquinone binding site. 4 helical membrane passes run 227-247, 289-309, 321-341, and 348-368; these read YKDL…TLFY, LGGV…PTLH, LTQT…WIGG, and FITI…ILMP.

Belongs to the cytochrome b family. The cytochrome bc1 complex contains 3 respiratory subunits (MT-CYB, CYC1 and UQCRFS1), 2 core proteins (UQCRC1 and UQCRC2) and probably 6 low-molecular weight proteins. Heme b serves as cofactor.

The protein localises to the mitochondrion inner membrane. Functionally, component of the ubiquinol-cytochrome c reductase complex (complex III or cytochrome b-c1 complex) that is part of the mitochondrial respiratory chain. The b-c1 complex mediates electron transfer from ubiquinol to cytochrome c. Contributes to the generation of a proton gradient across the mitochondrial membrane that is then used for ATP synthesis. This is Cytochrome b (MT-CYB) from Glyptemys muhlenbergii (Bog turtle).